The following is a 437-amino-acid chain: tRNA wybutosine-synthesizing protein 2 homolog (437 aa).

S-adenosyl-L-methionine contacts are provided by residues serine 208, lysine 215, glutamate 255, and 283–284 (DN). A compositionally biased stretch (polar residues) spans 331–344 (SFSGKNPQPPGSSN). Residues 331 to 374 (SFSGKNPQPPGSSNMEKKHWPHPQKITTDKQGNRTTGSCMGEMS) form a disordered region.

Belongs to the class I-like SAM-binding methyltransferase superfamily. TRM5/TYW2 family.

It carries out the reaction 4-demethylwyosine(37) in tRNA(Phe) + S-adenosyl-L-methionine = 4-demethyl-7-[(3S)-3-amino-3-carboxypropyl]wyosine(37) in tRNA(Phe) + S-methyl-5'-thioadenosine + H(+). Its pathway is tRNA modification; wybutosine-tRNA(Phe) biosynthesis. Its function is as follows. S-adenosyl-L-methionine-dependent transferase that acts as a component of the wybutosine biosynthesis pathway. Wybutosine is a hyper modified guanosine with a tricyclic base found at the 3'-position adjacent to the anticodon of eukaryotic phenylalanine tRNA. Catalyzes the transfer of the alpha-amino-alpha-carboxypropyl (acp) group from S-adenosyl-L-methionine to the C-7 position of 4-demethylwyosine (imG-14) to produce wybutosine-86. This is tRNA wybutosine-synthesizing protein 2 homolog (Trmt12) from Rattus norvegicus (Rat).